Reading from the N-terminus, the 212-residue chain is Thymidylate kinase (212 aa).

11 to 18 serves as a coordination point for ATP; the sequence is GPEGAGKT.

Belongs to the thymidylate kinase family.

The enzyme catalyses dTMP + ATP = dTDP + ADP. In terms of biological role, phosphorylation of dTMP to form dTDP in both de novo and salvage pathways of dTTP synthesis. This Streptococcus pneumoniae (strain ATCC 700669 / Spain 23F-1) protein is Thymidylate kinase.